The following is a 312-amino-acid chain: DNA-directed RNA polymerase subunit alpha (312 aa).

The tract at residues 1–229 is alpha N-terminal domain (alpha-NTD); sequence MLQYQIERID…ELFQPLATVT (229 aa). Residues 240–312 form an alpha C-terminal domain (alpha-CTD) region; that stretch reads PSPEAQIPLE…ISIPQSRTSV (73 aa).

It belongs to the RNA polymerase alpha chain family. As to quaternary structure, in cyanobacteria the RNAP catalytic core is composed of 2 alpha, 1 beta, 1 beta', 1 gamma and 1 omega subunit. When a sigma factor is associated with the core the holoenzyme is formed, which can initiate transcription.

The catalysed reaction is RNA(n) + a ribonucleoside 5'-triphosphate = RNA(n+1) + diphosphate. DNA-dependent RNA polymerase catalyzes the transcription of DNA into RNA using the four ribonucleoside triphosphates as substrates. The protein is DNA-directed RNA polymerase subunit alpha of Prochlorococcus marinus (strain MIT 9301).